Here is a 443-residue protein sequence, read N- to C-terminus: tRNA-2-methylthio-N(6)-dimethylallyladenosine synthase (443 aa).

The MTTase N-terminal domain occupies 3–120; that stretch reads SKLYIRTFGC…LPDLIDARRR (118 aa). [4Fe-4S] cluster is bound by residues Cys-12, Cys-49, Cys-83, Cys-157, Cys-161, and Cys-164. Positions 143–375 constitute a Radical SAM core domain; the sequence is RTEGSTAFVS…QEKIQLNAQA (233 aa). Positions 378–441 constitute a TRAM domain; sequence QGMVDTVQRI…SHTLRGEISD (64 aa).

Belongs to the methylthiotransferase family. MiaB subfamily. Monomer. [4Fe-4S] cluster serves as cofactor.

It is found in the cytoplasm. The enzyme catalyses N(6)-dimethylallyladenosine(37) in tRNA + (sulfur carrier)-SH + AH2 + 2 S-adenosyl-L-methionine = 2-methylsulfanyl-N(6)-dimethylallyladenosine(37) in tRNA + (sulfur carrier)-H + 5'-deoxyadenosine + L-methionine + A + S-adenosyl-L-homocysteine + 2 H(+). Functionally, catalyzes the methylthiolation of N6-(dimethylallyl)adenosine (i(6)A), leading to the formation of 2-methylthio-N6-(dimethylallyl)adenosine (ms(2)i(6)A) at position 37 in tRNAs that read codons beginning with uridine. This is tRNA-2-methylthio-N(6)-dimethylallyladenosine synthase from Nitrosomonas europaea (strain ATCC 19718 / CIP 103999 / KCTC 2705 / NBRC 14298).